The primary structure comprises 498 residues: Lysine--tRNA ligase (498 aa).

2 residues coordinate Mg(2+): Glu-401 and Glu-408.

It belongs to the class-II aminoacyl-tRNA synthetase family. In terms of assembly, homodimer. Mg(2+) serves as cofactor.

The protein localises to the cytoplasm. The enzyme catalyses tRNA(Lys) + L-lysine + ATP = L-lysyl-tRNA(Lys) + AMP + diphosphate. The polypeptide is Lysine--tRNA ligase (Dehalococcoides mccartyi (strain ATCC BAA-2266 / KCTC 15142 / 195) (Dehalococcoides ethenogenes (strain 195))).